The chain runs to 639 residues: Extracellular metalloproteinase NpIII (639 aa).

Positions 1-16 (MHMLLFIGALALPVFV) are cleaved as a signal peptide. A propeptide spanning residues 17 to 245 (CTQSCEPASL…IHGVVDYVSE (229 aa)) is cleaved from the precursor. N-linked (GlcNAc...) asparagine glycans are attached at residues Asn-287, Asn-320, Asn-336, and Asn-368. Residue His-429 participates in Zn(2+) binding. Residue Glu-430 is part of the active site. His-433 serves as a coordination point for Zn(2+). A glycan (N-linked (GlcNAc...) asparagine) is linked at Asn-509.

It belongs to the peptidase M36 family. Requires Zn(2+) as cofactor.

The protein resides in the secreted. Functionally, secreted metalloproteinase that allows assimilation of proteinaceous substrates. The polypeptide is Extracellular metalloproteinase NpIII (NpIII) (Aspergillus oryzae (strain ATCC 42149 / RIB 40) (Yellow koji mold)).